A 289-amino-acid polypeptide reads, in one-letter code: Bifunctional protein FolD (289 aa).

NADP(+) is bound by residues 166 to 168 (GRS), S191, and I232.

Belongs to the tetrahydrofolate dehydrogenase/cyclohydrolase family. In terms of assembly, homodimer.

It carries out the reaction (6R)-5,10-methylene-5,6,7,8-tetrahydrofolate + NADP(+) = (6R)-5,10-methenyltetrahydrofolate + NADPH. It catalyses the reaction (6R)-5,10-methenyltetrahydrofolate + H2O = (6R)-10-formyltetrahydrofolate + H(+). It functions in the pathway one-carbon metabolism; tetrahydrofolate interconversion. Catalyzes the oxidation of 5,10-methylenetetrahydrofolate to 5,10-methenyltetrahydrofolate and then the hydrolysis of 5,10-methenyltetrahydrofolate to 10-formyltetrahydrofolate. The sequence is that of Bifunctional protein FolD from Synechococcus sp. (strain JA-3-3Ab) (Cyanobacteria bacterium Yellowstone A-Prime).